The primary structure comprises 241 residues: Ribosome assembly factor mrt4 (241 aa).

It belongs to the universal ribosomal protein uL10 family. Associates with the pre-60S ribosomal particle.

It localises to the nucleus. The protein localises to the nucleolus. Its subcellular location is the cytoplasm. Functionally, component of the ribosome assembly machinery. Nuclear paralog of the ribosomal protein P0, it binds pre-60S subunits at an early stage of assembly in the nucleolus, and is replaced by P0 in cytoplasmic pre-60S subunits and mature 80S ribosomes. This chain is Ribosome assembly factor mrt4, found in Schizosaccharomyces pombe (strain 972 / ATCC 24843) (Fission yeast).